Consider the following 471-residue polypeptide: Elongation factor 1-alpha (471 aa).

The tr-type G domain occupies 10 to 239 (KPRLNACFIG…EALNYQDVPE (230 aa)). The interval 19–26 (GHVDSGKS) is G1. 19–26 (GHVDSGKS) lines the GTP pocket. A G2 region spans residues 75–79 (GITIT). The interval 96 to 99 (DCPG) is G3. GTP is bound by residues 96–100 (DCPGH) and 156–159 (NKMD). A G4 region spans residues 156–159 (NKMD). Residues 196–198 (SAF) are G5.

The protein belongs to the TRAFAC class translation factor GTPase superfamily. Classic translation factor GTPase family. EF-Tu/EF-1A subfamily. Component of the eukaryotic elongation factor 1 complex (eEF1).

It is found in the cytoplasm. It participates in protein biosynthesis; polypeptide chain elongation. GTP-binding component of the eukaryotic elongation factor 1 complex (eEF1). In its active GTP-bound form, binds to and delivers aminoacyl-tRNA to the A-site of ribosomes during protein biosynthesis. In the presence of a correct codon-anticodon match between the aminoacyl-tRNA and the A-site codon of the ribosome-bound mRNA, the ribosome acts as a GTPase activator and the GTP is hydrolyzed. The inactive GDP-bound form leaves the ribosome and must be recycled by its guanine nucleotide exchange factor (GEF) (eEF1B subcomplex) before binding another molecule of aminoacyl-tRNA. Required for nuclear export of aminoacyl-tRNAs. May also be involved in translational quality control by targeting cotranslationally damaged proteins to the proteasome. The chain is Elongation factor 1-alpha (TEF1) from Encephalitozoon cuniculi (strain GB-M1) (Microsporidian parasite).